The chain runs to 508 residues: Zinc finger CCCH-type with G patch domain-containing protein (508 aa).

Residues Pro-154 to Leu-177 form a C3H1-type zinc finger. The tract at residues Asp-253–Asp-279 is disordered. Residues Thr-309 to Glu-355 enclose the G-patch domain. The span at Gln-486–Glu-495 shows a compositional bias: polar residues. Residues Gln-486–Phe-508 form a disordered region. Residues Arg-499–Phe-508 are compositionally biased toward basic residues.

The protein resides in the nucleus. In terms of biological role, transcription repressor. The sequence is that of Zinc finger CCCH-type with G patch domain-containing protein from Drosophila virilis (Fruit fly).